The primary structure comprises 188 residues: dCTP deaminase (188 aa).

Residues 111-116, 135-137, Gln-156, Tyr-170, and Gln-180 each bind dCTP; these read KSTYAR and TLE. The active-site Proton donor/acceptor is Glu-137.

It belongs to the dCTP deaminase family. Homotrimer.

It carries out the reaction dCTP + H2O + H(+) = dUTP + NH4(+). It functions in the pathway pyrimidine metabolism; dUMP biosynthesis; dUMP from dCTP (dUTP route): step 1/2. Catalyzes the deamination of dCTP to dUTP. The chain is dCTP deaminase from Ralstonia pickettii (strain 12J).